Here is a 254-residue protein sequence, read N- to C-terminus: Low affinity immunoglobulin gamma Fc region receptor III-A (254 aa).

The signal sequence occupies residues 1 to 20 (MWQLLLPTALLLLVSAGMRA). Ig-like C2-type domains lie at 24–105 (PKAV…LEVH) and 107–189 (GWLL…VNIT). Intrachain disulfides connect Cys47-Cys89 and Cys128-Cys172. A glycan (N-linked (GlcNAc...) asparagine) is linked at Asn187. The chain crosses the membrane as a helical span at residues 207 to 229 (YQVSFCLVMVLLFAVDTGLYFSV). The segment at 234–254 (PSSTSDWKDHKFKWSKDPQDK) is disordered. Residues 239 to 254 (DWKDHKFKWSKDPQDK) are compositionally biased toward basic and acidic residues.

As to quaternary structure, forms a heterooligomeric complex with ITAM-containing signaling subunits, either a homodimer of CD247, a homodimer of FCER1G or a heterodimer of CD247 and FCER1G, to form a functional receptor complex. Interacts (via transmembrane domain) with signaling subunits; this interaction is a prerequisite for receptor complex expression on the cell surface and intracellular signal transduction. Binds the Fc region of antigen-complexed IgG with a preference for IgG1 and IgG3 isotypes. Interacts with CD2; this interaction is involved in NK cell activation and cytotoxicity. Interacts with S100A4; this interaction inhibits PKC-dependent phosphorylation of FCGR3A. In terms of processing, glycosylated. Glycosylation plays an inhibitory role in the interaction with IgG1 and IgG2. Undergoes rapid ectodomain shedding upon NK cell stimulation. The soluble form is produced by a proteolytic cleavage mediated by ADAM17. Repeated stimulation causes receptor shedding, a mechanism that allows for increased NK cell motility and detachment from opsonized target cells while avoiding activation-induced NK cell apoptosis. In terms of tissue distribution, lymphocytes and monocytes.

It localises to the cell membrane. Its subcellular location is the secreted. Its function is as follows. Receptor for the invariable Fc fragment of immunoglobulin gamma (IgG). Optimally activated upon binding of clustered antigen-IgG complexes displayed on cell surfaces, triggers lysis of antibody-coated cells, a process known as antibody-dependent cellular cytotoxicity (ADCC). Does not bind free monomeric IgG, thus avoiding inappropriate effector cell activation in the absence of antigenic trigger. Mediates IgG effector functions on natural killer (NK) cells. Binds antigen-IgG complexes generated upon infection and triggers NK cell-dependent cytokine production and degranulation to limit viral load and propagation. Involved in the generation of memory-like adaptive NK cells capable to produce high amounts of IFNG and to efficiently eliminate virus-infected cells via ADCC. Regulates NK cell survival and proliferation, in particular by preventing NK cell progenitor apoptosis. Fc-binding subunit that associates with CD247 and/or FCER1G adapters to form functional signaling complexes. Following the engagement of antigen-IgG complexes, triggers phosphorylation of immunoreceptor tyrosine-based activation motif (ITAM)-containing adapters with subsequent activation of phosphatidylinositol 3-kinase signaling and sustained elevation of intracellular calcium that ultimately drive NK cell activation. The ITAM-dependent signaling coupled to receptor phosphorylation by PKC mediates robust intracellular calcium flux that leads to production of pro-inflammatory cytokines, whereas in the absence of receptor phosphorylation it mainly activates phosphatidylinositol 3-kinase signaling leading to cell degranulation. Costimulates NK cells and trigger lysis of target cells independently of IgG binding. Mediates the antitumor activities of therapeutic antibodies. Upon ligation on monocytes triggers TNFA-dependent ADCC of IgG-coated tumor cells. Mediates enhanced ADCC in response to afucosylated IgGs. This is Low affinity immunoglobulin gamma Fc region receptor III-A (FCGR3A) from Papio anubis (Olive baboon).